Reading from the N-terminus, the 345-residue chain is MSLTYRDAGVDIDEGDRLVDLIKPHARPTLRPEVLGGIGGFGGLFALDVKKYREPVLVSGTDGVGTKLKVAFAADRHDTVGIDLVAMCVNDIAVVGAEPLFFLDYYATGKLSAEQGAQVVKGIAEGCRQAGCALIGGETAELPGFYERGEYDLAGFAVGCVDRPRIVDGTRVARGDVVIGIASSGLHSNGFSLARKALLDRYPLDHRFEALGGRTLADALLEPTRIYAKDVLALLEQVPVRAFAHITGGGLPGNVPRTLPDGTRAVLEEQRWPRPVIFDLVEREGQVPRDEMYRTFNMGLGLVAVVAPGDEAAAHAALRARGLEAWTVGAIEAGGPGEATCEVVR.

Belongs to the AIR synthase family.

It is found in the cytoplasm. The enzyme catalyses 2-formamido-N(1)-(5-O-phospho-beta-D-ribosyl)acetamidine + ATP = 5-amino-1-(5-phospho-beta-D-ribosyl)imidazole + ADP + phosphate + H(+). It functions in the pathway purine metabolism; IMP biosynthesis via de novo pathway; 5-amino-1-(5-phospho-D-ribosyl)imidazole from N(2)-formyl-N(1)-(5-phospho-D-ribosyl)glycinamide: step 2/2. The protein is Phosphoribosylformylglycinamidine cyclo-ligase of Anaeromyxobacter sp. (strain K).